The primary structure comprises 282 residues: Probable endonuclease 4 (282 aa).

The Zn(2+) site is built by H69, H109, E145, D179, H182, H216, D229, H231, and E261.

It belongs to the AP endonuclease 2 family. It depends on Zn(2+) as a cofactor.

The enzyme catalyses Endonucleolytic cleavage to 5'-phosphooligonucleotide end-products.. Functionally, endonuclease IV plays a role in DNA repair. It cleaves phosphodiester bonds at apurinic or apyrimidinic (AP) sites, generating a 3'-hydroxyl group and a 5'-terminal sugar phosphate. This Magnetococcus marinus (strain ATCC BAA-1437 / JCM 17883 / MC-1) protein is Probable endonuclease 4.